The sequence spans 290 residues: Arginine and glutamate-rich protein 1 (290 aa).

The span at 1 to 10 (MGSRSRTPSP) shows a compositional bias: polar residues. Disordered stretches follow at residues 1-137 (MGSR…AKEL), 193-216 (ERRREQIREEERRREEDEKQKREE), and 249-290 (MDEE…PGAL). Basic residues predominate over residues 12-28 (GKRRHHKSKHKKRSKSH). 2 stretches are compositionally biased toward basic and acidic residues: residues 29 to 44 (HDHERPSTRTDRDKSS) and 53 to 76 (RERDRDRERDRHRSDRHTERDYRH). Phosphoserine is present on residues Ser77 and Ser79. A compositionally biased stretch (low complexity) spans 88 to 99 (SSSSSDSQYSEQ). Positions 111–269 (FKKLDEQNQM…QEKRVKEEQK (159 aa)) form a coiled coil. Positions 124–137 (RLAEMERQRRAKEL) are enriched in basic and acidic residues. The segment covering 249-269 (MDEERQRMRKEQEKRVKEEQK) has biased composition (basic and acidic residues).

It belongs to the ARGLU1 family. Associates with the U1-snRNP complex; the interaction is enhanced by binding of Arglu1 to a stable intronic sequence RNA (sisRNA) produced from the Arglu1 gene by premature cleavage.

Its subcellular location is the nucleus. The protein localises to the nucleus speckle. In terms of biological role, post-transcriptional regulator of gene expression; modulates splicing and premature cleavage at cryptic polyadenylation sites of its own pre-mRNA through binding and regulation of the U1-snRNP complex. In Drosophila melanogaster (Fruit fly), this protein is Arginine and glutamate-rich protein 1.